A 373-amino-acid chain; its full sequence is Chaperone protein DnaJ (373 aa).

The J domain occupies 5–70 (DYYEVLGVHR…QQRVIYDQYG (66 aa)). Residues 136 to 214 (GLETKIQIPR…CHGSGRVRGK (79 aa)) form a CR-type zinc finger. Positions 149, 152, 166, 169, 188, 191, 202, and 205 each coordinate Zn(2+). CXXCXGXG motif repeat units follow at residues 149–156 (CGTCDGIG), 166–173 (CPTCQGAG), 188–195 (CPECNGEG), and 202–209 (CEECHGSG).

The protein belongs to the DnaJ family. Homodimer. The cofactor is Zn(2+).

Its subcellular location is the cytoplasm. Participates actively in the response to hyperosmotic and heat shock by preventing the aggregation of stress-denatured proteins and by disaggregating proteins, also in an autonomous, DnaK-independent fashion. Unfolded proteins bind initially to DnaJ; upon interaction with the DnaJ-bound protein, DnaK hydrolyzes its bound ATP, resulting in the formation of a stable complex. GrpE releases ADP from DnaK; ATP binding to DnaK triggers the release of the substrate protein, thus completing the reaction cycle. Several rounds of ATP-dependent interactions between DnaJ, DnaK and GrpE are required for fully efficient folding. Also involved, together with DnaK and GrpE, in the DNA replication of plasmids through activation of initiation proteins. This is Chaperone protein DnaJ from Syntrophotalea carbinolica (strain DSM 2380 / NBRC 103641 / GraBd1) (Pelobacter carbinolicus).